A 602-amino-acid polypeptide reads, in one-letter code: Leucine-rich repeat-containing protein 40 (602 aa).

Residues 1–20 are disordered; the sequence is MSRLKRIAGQDPRAGFKAAG. Residue serine 71 is modified to Phosphoserine. 20 LRR repeats span residues 83–104, 106–127, 129–150, 152–173, 175–196, 198–219, 221–242, 244–265, 266–286, 290–311, 313–335, 336–356, 400–421, 426–447, 450–471, 473–494, 496–517, 519–540, 543–564, and 566–586; these read DLTKLIISNNKLQSLTDDLRLL, ALTVLDIHDNQLTSLPSAMREL, NLQKLNVSHNKLKIFPEEITNL, NLKCLYLQHNELTCISEGFEQL, NLEDLDLSNNRLTTVPASFSSL, SLVRLNLSSNQLKSLPAEINRM, RLKHLDCNSNLLETIPPELAGM, SLELLYLRRNKLRFLPEFPSCS, LLKELHVGENQIEMLEAEHLK, SILVLDLRDNKLKSVPDEIILL, SLERLDLSNNDISSLPYSLGNLH, LKFLALEGNPLRTIRREIINK, TLKILDYSDKQATLIPDEVFNA, IITSINFSKNQLCEIPKRMVEL, MVSDVNLSFNKLSFISLELCML, KLTFLDLRNNFLNSLPEEMESL, RLQTINLSFNRFKMLPEVLYRI, TLETILISNNQVGSVDPQKMKM, NLTTLDLQNNDLLQIPPELGNC, and NLRTLLLDGNPFRVPRAAILI.

The sequence is that of Leucine-rich repeat-containing protein 40 (LRRC40) from Macaca fascicularis (Crab-eating macaque).